The sequence spans 478 residues: Cytochrome c-552 (478 aa).

An N-terminal signal peptide occupies residues 1–26; it reads MTRIKINARRIFSLLIPFFFFTSVHA. Residue His94 participates in heme c binding. Heme contacts are provided by Cys122, Cys125, and Lys126. The heme c site is built by Cys160, Cys163, His164, Cys209, Cys212, and His213. Ca(2+) is bound by residues Glu215, Tyr216, Lys261, and Gln263. A substrate-binding site is contributed by Tyr216. His264 provides a ligand contact to substrate. Residues His275, Cys282, Cys285, His286, His301, Cys314, Cys317, His318, and His393 each contribute to the heme c site.

This sequence belongs to the cytochrome c-552 family. Ca(2+) is required as a cofactor. Requires heme c as cofactor.

Its subcellular location is the periplasm. It catalyses the reaction 6 Fe(III)-[cytochrome c] + NH4(+) + 2 H2O = 6 Fe(II)-[cytochrome c] + nitrite + 8 H(+). It functions in the pathway nitrogen metabolism; nitrate reduction (assimilation). Functionally, catalyzes the reduction of nitrite to ammonia, consuming six electrons in the process. This Escherichia coli O9:H4 (strain HS) protein is Cytochrome c-552.